Here is a 286-residue protein sequence, read N- to C-terminus: Polyamine aminopropyltransferase (286 aa).

Residues 5 to 238 (PLWHETLHDH…GIMTFAWASD (234 aa)) form the PABS domain. Glutamine 33 serves as a coordination point for S-methyl-5'-thioadenosine. Spermidine-binding residues include histidine 64 and aspartate 88. Residues glutamate 108 and 140-141 (DG) contribute to the S-methyl-5'-thioadenosine site. The active-site Proton acceptor is the aspartate 158. 158–161 (DCTD) contacts spermidine. Proline 165 contributes to the S-methyl-5'-thioadenosine binding site.

It belongs to the spermidine/spermine synthase family. As to quaternary structure, homodimer or homotetramer.

It localises to the cytoplasm. It carries out the reaction S-adenosyl 3-(methylsulfanyl)propylamine + putrescine = S-methyl-5'-thioadenosine + spermidine + H(+). The protein operates within amine and polyamine biosynthesis; spermidine biosynthesis; spermidine from putrescine: step 1/1. Catalyzes the irreversible transfer of a propylamine group from the amino donor S-adenosylmethioninamine (decarboxy-AdoMet) to putrescine (1,4-diaminobutane) to yield spermidine. The chain is Polyamine aminopropyltransferase from Klebsiella pneumoniae (strain 342).